The sequence spans 122 residues: Ribosome-binding factor A (122 aa).

The protein belongs to the RbfA family. As to quaternary structure, monomer. Binds 30S ribosomal subunits, but not 50S ribosomal subunits or 70S ribosomes.

The protein resides in the cytoplasm. Functionally, one of several proteins that assist in the late maturation steps of the functional core of the 30S ribosomal subunit. Associates with free 30S ribosomal subunits (but not with 30S subunits that are part of 70S ribosomes or polysomes). Required for efficient processing of 16S rRNA. May interact with the 5'-terminal helix region of 16S rRNA. In Cupriavidus pinatubonensis (strain JMP 134 / LMG 1197) (Cupriavidus necator (strain JMP 134)), this protein is Ribosome-binding factor A.